Consider the following 867-residue polypeptide: Replication origin-binding protein (867 aa).

The disordered stretch occupies residues 1–39; sequence MNVATCTHQTHHAARAPGATSAPGAASGDPLGARRPIGD. The span at 15-28 shows a compositional bias: low complexity; sequence RAPGATSAPGAASG. The 166-residue stretch at 86–251 folds into the Helicase ATP-binding domain; it reads ASAPTARCVT…CSLRGEKNVH (166 aa). 99 to 106 serves as a coordination point for ATP; that stretch reads APMGSGKT.

The protein belongs to the herpesviridae OriBP family. Homodimer. Interacts with the major DNA-binding protein ICP8. Interacts with the helicase/primase component UL8 and the polymerase accessory protein UL42.

The protein resides in the host nucleus. Functions as a docking protein to recruit essential components of the viral replication machinery to viral DNA origins. In the presence of the major DNA-binding protein, opens dsDNA leading to a conformational change in the origin that facilitates DNA unwinding and subsequent replication. The protein is Replication origin-binding protein of Human herpesvirus 2 (strain HG52) (HHV-2).